Reading from the N-terminus, the 1347-residue chain is Protocadherin-11 X-linked (1347 aa).

The N-terminal stretch at 1 to 23 (MDLLSGTYIFAVLLACVVFHSGA) is a signal peptide. At 24–812 (QEKNYTIREE…VSSPTSDYVK (789 aa)) the chain is on the extracellular side. Cadherin domains lie at 26–139 (KNYT…APLF), 140–249 (PATV…HPVF), 250–355 (KETE…VPSI), 362–466 (NPVN…APVF), 467–570 (TQSF…SPVF), 571–673 (THNE…KPVF), and 677–795 (PSNY…APVT). Residues asparagine 27, asparagine 48, and asparagine 54 are each glycosylated (N-linked (GlcNAc...) asparagine). Asparagine 344 carries an N-linked (GlcNAc...) asparagine glycan. Asparagine 553 is a glycosylation site (N-linked (GlcNAc...) asparagine). A glycan (N-linked (GlcNAc...) asparagine) is linked at asparagine 773. A helical transmembrane segment spans residues 813–833 (ILVAAVAGTITVVVVIFITAV). The Cytoplasmic segment spans residues 834–1347 (VRCRQAPHLK…DSPVMEEHPL (514 aa)). Disordered regions lie at residues 1057-1091 (LPEG…GYPQ), 1097-1116 (RATP…ESTF), and 1325-1347 (TFTP…EHPL).

It localises to the cell membrane. Functionally, potential calcium-dependent cell-adhesion protein. This is Protocadherin-11 X-linked (PCDH11X) from Pan paniscus (Pygmy chimpanzee).